Consider the following 600-residue polypeptide: Na(+)/dicarboxylate cotransporter 3 (600 aa).

Residues 1–16 (MAALAALAKKVWSARR) are Cytoplasmic-facing. The chain crosses the membrane as a helical span at residues 17 to 37 (LLVLLLVPLALLPILFALPPK). Topologically, residues 38-55 (EGRCLYVILLMAVYWCTE) are extracellular. Residues 56-76 (ALPLSVTALLPIILFPFMGIL) form a helical membrane-spanning segment. Over 77–82 (PSSKVC) the chain is Cytoplasmic. Residues 83–103 (PQYFLDTNFLFLSGLIMASAI) form a helical membrane-spanning segment. Residues 104-137 (EERNLHRRIALKVLMLVGVQPARLILGMMVTTSF) lie on the Extracellular side of the membrane. A helical transmembrane segment spans residues 138–158 (LSMWLSNTASTAMMLPIASAI). At 159–229 (LKSLFGQRDT…KEEEHRRNIW (71 aa)) the chain is on the cytoplasmic side. A helical membrane pass occupies residues 230–250 (KGFLISIPYSASIGGTATLTG). The Extracellular segment spans residues 251–278 (TAPNLILLGQLKSFFPQCDVVNFGSWFI). Residues 279-299 (FAFPLMLLFLLVGWLWISFLY) form a helical membrane-spanning segment. Residues 300–336 (GGMSWRGWRKKNSKLQDVAEDKAKAVIQEEFQNLGPI) lie on the Cytoplasmic side of the membrane. Residues 337–357 (KFAEQAVFILFCLFAILLFSR) form a helical membrane-spanning segment. The Extracellular portion of the chain corresponds to 358–372 (DPKFIPGWASLFAPG). Residues 373–393 (FVSDAVTGVAIVTILFFFPSQ) form a helical membrane-spanning segment. The Cytoplasmic portion of the chain corresponds to 394–422 (KPSLKWWFDFKAPNSETEPLLSWKKAQET). An intramembrane region (helical) is located at residues 423 to 443 (VPWNIILLLGGGFAMAKGCEE). Residues 444–461 (SGLSAWIGGQLHPLEHVP) are Cytoplasmic-facing. The helical transmembrane segment at 462 to 482 (PLLAVLLITVVIAFFTEFASN) threads the bilayer. The Extracellular segment spans residues 483-505 (TATIIIFLPVLAELAIRLHVHPL). A helical transmembrane segment spans residues 506–526 (YLMIPGTVSCSYAFMLPVSTP). The Cytoplasmic portion of the chain corresponds to 527–546 (PNSIAFSTGHLLVKDMVRTG). The helical transmembrane segment at 547–567 (LLMNLMGVLLLSLAMNTWAQA) threads the bilayer. Topologically, residues 568–600 (IFQLGTFPDWANTHAANVTALPPALTNNTVQTL) are extracellular. 2 N-linked (GlcNAc...) asparagine glycosylation sites follow: asparagine 584 and asparagine 594.

It belongs to the SLC13A/DASS transporter (TC 2.A.47) family. NADC subfamily. As to expression, highly expressed in proximal parts of straight tubules in the kidney. Detected in placenta, in brain, and in liver. Strongly expressed within the meningeal layers of supporting tissue that surround the brain and relatively weakly expressed throughout the cerebral cortex, hippocampus, and cerebellum.

It is found in the cell membrane. It carries out the reaction succinate(out) + 3 Na(+)(out) = succinate(in) + 3 Na(+)(in). It catalyses the reaction 2-oxoglutarate(out) + 3 Na(+)(out) = 2-oxoglutarate(in) + 3 Na(+)(in). The enzyme catalyses N-acetyl-L-aspartate(out) + 3 Na(+)(out) = N-acetyl-L-aspartate(in) + 3 Na(+)(in). The catalysed reaction is glutarate(out) + 3 Na(+)(out) = glutarate(in) + 3 Na(+)(in). It carries out the reaction fumarate(out) + 3 Na(+)(out) = fumarate(in) + 3 Na(+)(in). It catalyses the reaction malate(out) + 3 Na(+)(out) = malate(in) + 3 Na(+)(in). The enzyme catalyses 2,2-dimethylsuccinate(out) + 3 Na(+)(out) = 2,2-dimethylsuccinate(in) + 3 Na(+)(in). The catalysed reaction is 2,3-dimethylsuccinate(out) + 3 Na(+)(out) = 2,3-dimethylsuccinate(in) + 3 Na(+)(in). It carries out the reaction itaconate(out) + 3 Na(+)(out) = itaconate(in) + 3 Na(+)(in). Its activity is regulated as follows. Li(+) decreases succinate transport in the presence of Na(+). In terms of biological role, high-affinity sodium-dicarboxylate cotransporter that accepts a range of substrates with 4-6 carbon atoms, such as the citric acid cycle intermediates succinate and alpha-ketoglutarate (2-oxoglutarate), as well as other compounds including N-acetyl-L-aspartate. Transports the dicarboxylate into the cell with a probable stoichiometry of 3 Na(+) for 1 divalent dicarboxylate, rendering the process electrogenic. Can transport citrate in a Na(+)-dependent manner, recognizing the divalent form of citrate rather than the trivalent form which is normally found in blood. Imports itaconate in hepatocytes leading to activation of TFEB-dependent lysosomal biogenesis involved in antibacterial innate immune response. The protein is Na(+)/dicarboxylate cotransporter 3 (Slc13a3) of Rattus norvegicus (Rat).